Reading from the N-terminus, the 330-residue chain is Ketol-acid reductoisomerase (NADP(+)) (330 aa).

The KARI N-terminal Rossmann domain occupies 2–182; sequence VEIYYDDDAS…GGTRAGALRT (181 aa). NADP(+) is bound by residues 25-28, serine 51, and serine 53; that span reads YGSQ. The active site involves histidine 108. Glycine 134 contacts NADP(+). One can recognise a KARI C-terminal knotted domain in the interval 183-328; it reads TFTEETETDL…AKLRPLMSWI (146 aa). The Mg(2+) site is built by aspartate 191, glutamate 195, glutamate 227, and glutamate 231. Residue serine 252 participates in substrate binding.

Belongs to the ketol-acid reductoisomerase family. Mg(2+) serves as cofactor.

It catalyses the reaction (2R)-2,3-dihydroxy-3-methylbutanoate + NADP(+) = (2S)-2-acetolactate + NADPH + H(+). The enzyme catalyses (2R,3R)-2,3-dihydroxy-3-methylpentanoate + NADP(+) = (S)-2-ethyl-2-hydroxy-3-oxobutanoate + NADPH + H(+). The protein operates within amino-acid biosynthesis; L-isoleucine biosynthesis; L-isoleucine from 2-oxobutanoate: step 2/4. Its pathway is amino-acid biosynthesis; L-valine biosynthesis; L-valine from pyruvate: step 2/4. In terms of biological role, involved in the biosynthesis of branched-chain amino acids (BCAA). Catalyzes an alkyl-migration followed by a ketol-acid reduction of (S)-2-acetolactate (S2AL) to yield (R)-2,3-dihydroxy-isovalerate. In the isomerase reaction, S2AL is rearranged via a Mg-dependent methyl migration to produce 3-hydroxy-3-methyl-2-ketobutyrate (HMKB). In the reductase reaction, this 2-ketoacid undergoes a metal-dependent reduction by NADPH to yield (R)-2,3-dihydroxy-isovalerate. The sequence is that of Ketol-acid reductoisomerase (NADP(+)) from Frankia alni (strain DSM 45986 / CECT 9034 / ACN14a).